Reading from the N-terminus, the 659-residue chain is Pentatricopeptide repeat-containing protein At3g48810 (659 aa).

PPR repeat units follow at residues 75 to 109 (TPLTFEVMIRKLAMDGQVDSVQYLLQQMKLQGFHC), 110 to 144 (SEDLFISVISVYRQVGLAERAVEMFYRIKEFGCDP), 145 to 179 (SVKIYNHVLDTLLGENRIQMIYMVYRDMKRDGFEP), 180 to 214 (NVFTYNVLLKALCKNNKVDGAKKLLVEMSNKGCCP), 215 to 243 (DAVSYTTVISSMCEVGLVKEGRELAERFE), 245 to 279 (VVSVYNALINGLCKEHDYKGAFELMREMVEKGISP), 280 to 314 (NVISYSTLINVLCNSGQIELAFSFLTQMLKRGCHP), 315 to 350 (NIYTLSSLVKGCFLRGTTFDALDLWNQMIRGFGLQP), 351 to 385 (NVVAYNTLVQGFCSHGNIVKAVSVFSHMEEIGCSP), 386 to 420 (NIRTYGSLINGFAKRGSLDGAVYIWNKMLTSGCCP), 421 to 455 (NVVVYTNMVEALCRHSKFKEAESLIEIMSKENCAP), 456 to 490 (SVPTFNAFIKGLCDAGRLDWAEKVFRQMEQQHRCP), 492 to 526 (NIVTYNELLDGLAKANRIEEAYGLTREIFMRGVEW), 527 to 561 (SSSTYNTLLHGSCNAGLPGIALQLVGKMMVDGKSP), 562 to 598 (DEITMNMIILAYCKQGKAERAAQMLDLVSCGRRKWRP), and 599 to 633 (DVISYTNVIWGLCRSNCREDGVILLERMISAGIVP).

Belongs to the PPR family. P subfamily.

In Arabidopsis thaliana (Mouse-ear cress), this protein is Pentatricopeptide repeat-containing protein At3g48810.